We begin with the raw amino-acid sequence, 370 residues long: Alpha-ketoglutarate-dependent xanthine dioxygenase xanA (370 aa).

His-107 is a substrate binding site. Fe cation-binding residues include His-149 and Asp-151. 2-oxoglutarate contacts are provided by Thr-195 and Trp-325. His-340 contacts Fe cation. Arg-352 lines the 2-oxoglutarate pocket.

This sequence belongs to the TfdA dioxygenase family. The cofactor is Fe(2+). In terms of processing, glycosylated. Is subject to both N- and O-linked glycosylation. Post-translationally, phosphorylated.

It is found in the cytoplasm. It localises to the cytosol. The enzyme catalyses xanthine + 2-oxoglutarate + O2 = urate + succinate + CO2. With respect to regulation, cu(2+) and Zn(2+) completely inhibit the xanthine dioxygenase activity, whereas Co(2+), Mn(2+), and Ni(2+) partially inhibit the activity. The inactive metal ions are presumed to compete for the Fe(2+)-binding site. N-oxalylglycine (NOG), a known inhibitor of several Fe(2+)/alpha-ketoglutarate-dependent dioxygenase family members, competes with alpha-ketoglutarate and provides a Ki of 0.12 uM for inhibition. 6,8-dihydroxypurine acts as a slow-binding competitive inhibitor. The thiol-specific inhibitors 5,5'-dithiobis(2-nitrobenzoic acid) (DTNB) and iodoacetamide, inhibit also the catalytic activity. Its function is as follows. Alpha-ketoglutarate-dependent xanthine dioxygenase is a non-heme mononuclear Fe(2+) enzyme that decarboxylates alpha-ketoglutarate to succinate and CO(2) while hydroxylating xanthine to generate uric acid. Allows xanthine utilization as a nitrogen source. Whereas xanA is highly specific for xanthine, alpha-ketoadipic acid can replace alpha-ketoglutarate as a cosubstrate. Exhibits ferroxidase activity in the absence of substrates. This Emericella nidulans (Aspergillus nidulans) protein is Alpha-ketoglutarate-dependent xanthine dioxygenase xanA.